The following is a 278-amino-acid chain: Shikimate dehydrogenase (NADP(+)) (278 aa).

Shikimate is bound by residues 19-21 and Thr66; that span reads SLS. The Proton acceptor role is filled by Lys70. Position 82 (Asp82) interacts with NADP(+). Asn91 and Asp107 together coordinate shikimate. Residues 133-137, 157-162, and Ile222 each bind NADP(+); these read GSGGA and NRTRAR. Position 224 (Tyr224) interacts with shikimate. Gly245 serves as a coordination point for NADP(+).

Belongs to the shikimate dehydrogenase family. Homodimer.

It carries out the reaction shikimate + NADP(+) = 3-dehydroshikimate + NADPH + H(+). The protein operates within metabolic intermediate biosynthesis; chorismate biosynthesis; chorismate from D-erythrose 4-phosphate and phosphoenolpyruvate: step 4/7. Involved in the biosynthesis of the chorismate, which leads to the biosynthesis of aromatic amino acids. Catalyzes the reversible NADPH linked reduction of 3-dehydroshikimate (DHSA) to yield shikimate (SA). This Jannaschia sp. (strain CCS1) protein is Shikimate dehydrogenase (NADP(+)).